The sequence spans 448 residues: Tubulin beta-1 chain (448 aa).

Positions 11, 69, 138, 142, 143, 144, 204, and 226 each coordinate GTP. Glutamate 69 provides a ligand contact to Mg(2+). A disordered region spans residues alanine 428–alanine 448. The segment covering isoleucine 430–alanine 448 has biased composition (acidic residues).

It belongs to the tubulin family. As to quaternary structure, dimer of alpha and beta chains. A typical microtubule is a hollow water-filled tube with an outer diameter of 25 nm and an inner diameter of 15 nM. Alpha-beta heterodimers associate head-to-tail to form protofilaments running lengthwise along the microtubule wall with the beta-tubulin subunit facing the microtubule plus end conferring a structural polarity. Microtubules usually have 13 protofilaments but different protofilament numbers can be found in some organisms and specialized cells. The cofactor is Mg(2+).

The protein resides in the cytoplasm. The protein localises to the cytoskeleton. In terms of biological role, tubulin is the major constituent of microtubules, a cylinder consisting of laterally associated linear protofilaments composed of alpha- and beta-tubulin heterodimers. Microtubules grow by the addition of GTP-tubulin dimers to the microtubule end, where a stabilizing cap forms. Below the cap, tubulin dimers are in GDP-bound state, owing to GTPase activity of alpha-tubulin. In Echinococcus multilocularis (Fox tapeworm), this protein is Tubulin beta-1 chain (TUB-1).